The primary structure comprises 223 residues: MIF4G domain-containing protein A (223 aa).

Positions 7–206 (QEDYKMQAFD…LEMIEYRAAG (200 aa)) constitute an MIF4G domain.

The protein belongs to the MIF4GD family. Interacts with eif4g1, eif4g2 and slbp; probably tethered by SLBP to the 3'-end of mRNAs ending with the histone stem-loop, it also interacts with eif4g1 which is bound to their 5'-end.

The protein localises to the cytoplasm. Its subcellular location is the nucleus. Its function is as follows. Functions in replication-dependent translation of histone mRNAs which differ from other eukaryotic mRNAs in that they do not end with a poly-A tail but a stem-loop. May participate in circularizing those mRNAs specifically enhancing their translation. This is MIF4G domain-containing protein A (mif4gd-a) from Xenopus laevis (African clawed frog).